A 151-amino-acid chain; its full sequence is Large ribosomal subunit protein uL15 (151 aa).

Residues 1–58 (MELNQLKSVPKARNHKTKTLGRGHGSGLGKTSGRGQKGQKARKSGLTRPGFEGGQTPL) are disordered. A compositionally biased stretch (basic residues) spans 10 to 21 (PKARNHKTKTLG). A compositionally biased stretch (gly residues) spans 22–36 (RGHGSGLGKTSGRGQ).

The protein belongs to the universal ribosomal protein uL15 family. In terms of assembly, part of the 50S ribosomal subunit.

Functionally, binds to the 23S rRNA. This Mycoplasma pneumoniae (strain ATCC 29342 / M129 / Subtype 1) (Mycoplasmoides pneumoniae) protein is Large ribosomal subunit protein uL15.